A 262-amino-acid polypeptide reads, in one-letter code: Indole-3-glycerol phosphate synthase (262 aa).

Belongs to the TrpC family.

It carries out the reaction 1-(2-carboxyphenylamino)-1-deoxy-D-ribulose 5-phosphate + H(+) = (1S,2R)-1-C-(indol-3-yl)glycerol 3-phosphate + CO2 + H2O. It functions in the pathway amino-acid biosynthesis; L-tryptophan biosynthesis; L-tryptophan from chorismate: step 4/5. The protein is Indole-3-glycerol phosphate synthase of Thiobacillus denitrificans (strain ATCC 25259 / T1).